A 206-amino-acid chain; its full sequence is RNA-binding protein (206 aa).

A disordered region spans residues 87–206 (PRGMQRGNRR…SGAKSKRRPR (120 aa)). Basic and acidic residues predominate over residues 109–132 (MPKDDSNDRKKAKTSKDRKVEKSS).

The protein belongs to the phytoreovirus RNA-binding protein family.

Its subcellular location is the host cytoplasm. In terms of biological role, constituent of viral factories. Binds to ssRNA and dsRNA. The sequence is that of RNA-binding protein from Rice gall dwarf virus (RGDV).